The chain runs to 70 residues: Conotoxin Lt11.2 (70 aa).

A signal peptide spans 1–26 (MMFRLTSVSCFLLFIVFLNLVVLTNA). Disulfide bonds link Cys27–Cys41, Cys34–Cys46, Cys40–Cys50, and Cys45–Cys54. Pro57 bears the Proline amide mark. A propeptide spanning residues 61-70 (EKLQEFFRQR) is cleaved from the precursor.

It belongs to the conotoxin I2 superfamily. As to expression, expressed by the venom duct.

Its subcellular location is the secreted. The protein is Conotoxin Lt11.2 of Conus litteratus (Lettered cone).